The chain runs to 577 residues: 2-succinyl-5-enolpyruvyl-6-hydroxy-3-cyclohexene-1-carboxylate synthase (577 aa).

It belongs to the TPP enzyme family. MenD subfamily. Homodimer. Requires Mg(2+) as cofactor. It depends on Mn(2+) as a cofactor. Thiamine diphosphate serves as cofactor.

It catalyses the reaction isochorismate + 2-oxoglutarate + H(+) = 5-enolpyruvoyl-6-hydroxy-2-succinyl-cyclohex-3-ene-1-carboxylate + CO2. It functions in the pathway quinol/quinone metabolism; 1,4-dihydroxy-2-naphthoate biosynthesis; 1,4-dihydroxy-2-naphthoate from chorismate: step 2/7. It participates in quinol/quinone metabolism; menaquinone biosynthesis. Its function is as follows. Catalyzes the thiamine diphosphate-dependent decarboxylation of 2-oxoglutarate and the subsequent addition of the resulting succinic semialdehyde-thiamine pyrophosphate anion to isochorismate to yield 2-succinyl-5-enolpyruvyl-6-hydroxy-3-cyclohexene-1-carboxylate (SEPHCHC). This Porphyromonas gingivalis (strain ATCC BAA-308 / W83) protein is 2-succinyl-5-enolpyruvyl-6-hydroxy-3-cyclohexene-1-carboxylate synthase.